The primary structure comprises 386 residues: Succinate--CoA ligase [ADP-forming] subunit beta (386 aa).

The region spanning 9–244 (KEILRKYGVP…HDEEDPLETR (236 aa)) is the ATP-grasp domain. Residues Lys46, 53–55 (GRG), Glu99, Cys102, and Glu107 each bind ATP. 2 residues coordinate Mg(2+): Asn199 and Asp213. Substrate is bound by residues Asn264 and 321–323 (GIM).

It belongs to the succinate/malate CoA ligase beta subunit family. In terms of assembly, heterotetramer of two alpha and two beta subunits. It depends on Mg(2+) as a cofactor.

The catalysed reaction is succinate + ATP + CoA = succinyl-CoA + ADP + phosphate. It catalyses the reaction GTP + succinate + CoA = succinyl-CoA + GDP + phosphate. It participates in carbohydrate metabolism; tricarboxylic acid cycle; succinate from succinyl-CoA (ligase route): step 1/1. Its function is as follows. Succinyl-CoA synthetase functions in the citric acid cycle (TCA), coupling the hydrolysis of succinyl-CoA to the synthesis of either ATP or GTP and thus represents the only step of substrate-level phosphorylation in the TCA. The beta subunit provides nucleotide specificity of the enzyme and binds the substrate succinate, while the binding sites for coenzyme A and phosphate are found in the alpha subunit. The chain is Succinate--CoA ligase [ADP-forming] subunit beta from Rickettsia peacockii (strain Rustic).